Here is a 417-residue protein sequence, read N- to C-terminus: Aromatic-amino-acid aminotransferase 1 (417 aa).

N6-(pyridoxal phosphate)lysine is present on Lys258.

This sequence belongs to the class-I pyridoxal-phosphate-dependent aminotransferase family. As to quaternary structure, homodimer. Pyridoxal 5'-phosphate is required as a cofactor.

It carries out the reaction an aromatic L-alpha-amino acid + 2-oxoglutarate = an aromatic oxo-acid + L-glutamate. Its function is as follows. Catalyzes the transamination of phenylalanine, tyrosine and tryptophan. Shows virtually no activity towards aspartic acid, alanine, valine or isoleucine. The chain is Aromatic-amino-acid aminotransferase 1 from Thermococcus litoralis (strain ATCC 51850 / DSM 5473 / JCM 8560 / NS-C).